The sequence spans 445 residues: UPF0210 protein Ccon26_06850 (445 aa).

It belongs to the UPF0210 family. As to quaternary structure, homodimer.

This chain is UPF0210 protein Ccon26_06850, found in Campylobacter concisus (strain 13826).